Here is a 317-residue protein sequence, read N- to C-terminus: Melanocyte-stimulating hormone receptor (317 aa).

At 1-37 the chain is on the extracellular side; that stretch reads MPLQGPQRRLLGSLNSTLPATPYLGLTTNQTEPPCLE. N29 is a glycosylation site (N-linked (GlcNAc...) asparagine). Residues 38 to 63 traverse the membrane as a helical segment; the sequence is VSIPDGLFLSLGLVSLVENVLVVTAI. The Cytoplasmic segment spans residues 64–72; the sequence is AKNRNLHSP. A helical membrane pass occupies residues 73–93; the sequence is MYYFICCLAVSDLLVSMSNVL. Topologically, residues 94–118 are extracellular; that stretch reads EMAILLLLEAGVLATQASVLQQLDN. The helical transmembrane segment at 119-140 threads the bilayer; it reads IIDVLICGSMVSSLCFLGSIAV. Topologically, residues 141–163 are cytoplasmic; that stretch reads DRYISIFYALRYHSIMMLPRVWR. The helical transmembrane segment at 164–183 threads the bilayer; the sequence is AIVAIWVVSVLSSTLFIAYY. Residues 184-191 lie on the Extracellular side of the membrane; that stretch reads NHTAVLLC. A helical transmembrane segment spans residues 192-211; sequence LVTFFVAMLVLMAVLYVHML. The Cytoplasmic portion of the chain corresponds to 212-240; the sequence is ARACQHARGIARLHKRQHPIHQGFGLKGA. Residues 241-266 form a helical membrane-spanning segment; the sequence is ATLTILLGVFFLCWGPFFLHLSLLIL. Over 267-279 the chain is Extracellular; sequence CPQHPTCGCVFKN. Residues 280–300 traverse the membrane as a helical segment; that stretch reads FKLFLTLILCSAIVDPLIYAF. Residues 301-317 lie on the Cytoplasmic side of the membrane; sequence RSQELRKTLQEVLLCSW. C315 is lipidated: S-palmitoyl cysteine.

This sequence belongs to the G-protein coupled receptor 1 family. Interacts with MGRN1, but does not undergo MGRN1-mediated ubiquitination; this interaction competes with GNAS-binding and thus inhibits agonist-induced cAMP production. Interacts with OPN3; the interaction results in a decrease in MC1R-mediated cAMP signaling and ultimately a decrease in melanin production in melanocytes.

Its subcellular location is the cell membrane. In terms of biological role, receptor for MSH (alpha, beta and gamma) and ACTH. The activity of this receptor is mediated by G proteins which activate adenylate cyclase. Mediates melanogenesis, the production of eumelanin (black/brown) and phaeomelanin (red/yellow), via regulation of cAMP signaling in melanocytes. In Equus caballus (Horse), this protein is Melanocyte-stimulating hormone receptor (MC1R).